We begin with the raw amino-acid sequence, 363 residues long: tRNA(Met) cytidine acetate ligase (363 aa).

ATP contacts are provided by residues 7-20 (IAEF…HKYL), Gly-96, Asn-152, and Arg-175.

The protein belongs to the TmcAL family.

It localises to the cytoplasm. The catalysed reaction is cytidine(34) in elongator tRNA(Met) + acetate + ATP = N(4)-acetylcytidine(34) in elongator tRNA(Met) + AMP + diphosphate. Its function is as follows. Catalyzes the formation of N(4)-acetylcytidine (ac(4)C) at the wobble position of elongator tRNA(Met), using acetate and ATP as substrates. First activates an acetate ion to form acetyladenylate (Ac-AMP) and then transfers the acetyl group to tRNA to form ac(4)C34. In Streptococcus thermophilus (strain CNRZ 1066), this protein is tRNA(Met) cytidine acetate ligase.